We begin with the raw amino-acid sequence, 134 residues long: Large-conductance mechanosensitive channel (134 aa).

A run of 2 helical transmembrane segments spans residues 16 to 36 (VIDLAVAVVIGAAFGKIVTAL) and 81 to 101 (GDFLNTILQFIIIAFAIFIIV).

The protein belongs to the MscL family. Homopentamer.

Its subcellular location is the cell inner membrane. Functionally, channel that opens in response to stretch forces in the membrane lipid bilayer. May participate in the regulation of osmotic pressure changes within the cell. The sequence is that of Large-conductance mechanosensitive channel from Xylella fastidiosa (strain 9a5c).